The chain runs to 58 residues: DNA-directed RNA polymerases I, II, and III subunit RPABC4 (58 aa).

Zn(2+) contacts are provided by Cys19, Cys22, Cys36, and Cys39. A C4-type zinc finger spans residues 19 to 39; it reads CGECHTENEIKSRDPIRCREC.

It belongs to the archaeal Rpo12/eukaryotic RPC10 RNA polymerase subunit family. As to quaternary structure, component of the RNA polymerase I (Pol I), RNA polymerase II (Pol II) and RNA polymerase III (Pol III) complexes consisting of at least 13, 12 and 17 subunits, respectively. Pol I complex consists of a ten-subunit catalytic core composed of POLR1A/RPA1, POLR1B/RPA2, POLR1C/RPAC1, POLR1D/RPAC2, POLR1H/RPA12, POLR2E/RPABC1, POLR2F/RPABC2, POLR2H/RPABC3, POLR2K/RPABC4 and POLR2L/RPABC5; a mobile stalk subunit POLR1F/RPA43 protruding from the core and additional subunits homologous to general transcription factors POLR1E/RPA49 and POLR1G/RPA34. Part of Pol I pre-initiation complex (PIC), in which Pol I core assembles with RRN3 and promoter-bound UTBF and SL1/TIF-IB complex. Pol II complex contains a ten-subunit catalytic core composed of POLR2A/RPB1, POLR2B/RPB2, POLR2C/RPB3, POLR2I/RPB9, POLR2J/RPB11, POLR2E/RPABC1, POLR2F/RPABC2, POLR2H/RPABC3, POLR2K/RPABC4 and POLR2L/RPABC5 and a mobile stalk composed of two subunits POLR2D/RPB4 and POLR2G/RPB7. Part of Pol II(G) complex, in which Pol II core associates with an additional subunit POLR2M; unlike conventional Pol II, Pol II(G) functions as a transcriptional repressor. Part of TBP-based Pol II pre-initiation complex (PIC), in which Pol II core assembles with general transcription factors and other specific initiation factors including GTF2E1, GTF2E2, GTF2F1, GTF2F2, TCEA1, ERCC2, ERCC3, GTF2H2, GTF2H3, GTF2H4, GTF2H5, GTF2A1, GTF2A2, GTF2B and TBP; this large multi-subunit PIC complex mediates DNA unwinding and targets Pol II core to the transcription start site where the first phosphodiester bond forms. Pol III complex consists of a ten-subunit catalytic core composed of POLR3A/RPC1, POLR3B/RPC2, POLR1C/RPAC1, POLR1D/RPAC2, POLR3K/RPC10, POLR2E/RPABC1, POLR2F/RPABC2, POLR2H/RPABC3, POLR2K/RPABC4 and POLR2L/RPABC5; a mobile stalk composed of two subunits POLR3H/RPC8 and CRCP/RPC9, protruding from the core and functioning primarily in transcription initiation; and additional subunits homologous to general transcription factors of the RNA polymerase II machinery, POLR3C/RPC3-POLR3F/RPC6-POLR3G/RPC7 heterotrimer required for transcription initiation and POLR3D/RPC4-POLR3E/RPC5 heterodimer involved in both transcription initiation and termination.

The protein resides in the nucleus. It localises to the nucleolus. Functionally, DNA-dependent RNA polymerase catalyzes the transcription of DNA into RNA using the four ribonucleoside triphosphates as substrates. Common component of RNA polymerases I, II and III which synthesize ribosomal RNA precursors, mRNA precursors and many functional non-coding RNAs, and a small RNAs, such as 5S rRNA and tRNAs, respectively. The protein is DNA-directed RNA polymerases I, II, and III subunit RPABC4 (POLR2K) of Bos taurus (Bovine).